A 425-amino-acid chain; its full sequence is Histone-binding protein RBBP4-B (425 aa).

Residue A2 is modified to N-acetylalanine. WD repeat units lie at residues 32–125, 126–175, 176–223, 225–270, 271–314, 315–371, and 372–404; these read YDLV…NHEG, EVNR…RLRG, HQKE…KTIF, GHTA…HSVD, AHTA…HSFE, SHKD…FIHG, and GHTA…VWQM.

This sequence belongs to the WD repeat RBAP46/RBAP48/MSI1 family. As to quaternary structure, binds directly to histone H4, probably via helix 1 of the histone fold, a region that is not accessible when histone H4 is in chromatin. Probably forms a large corepressor complex that contains ncor1, sin3a, hdac1-A and/or hdac1-B, hdac2, rbbp4-A and/or rbbp4-B and possibly rbbp7.

It localises to the nucleus. Its subcellular location is the chromosome. It is found in the telomere. In terms of biological role, core histone-binding subunit that may target chromatin assembly factors, chromatin remodeling factors and histone deacetylases to their histone substrates in a manner that is regulated by nucleosomal DNA. Component of several complexes which regulate chromatin metabolism. The sequence is that of Histone-binding protein RBBP4-B (rbbp4-b) from Xenopus laevis (African clawed frog).